Reading from the N-terminus, the 188-residue chain is dCTP deaminase (188 aa).

DCTP-binding positions include lysine 111–arginine 116, threonine 135–glutamate 137, glutamine 156, tyrosine 170, and glutamine 180. Residue glutamate 137 is the Proton donor/acceptor of the active site.

Belongs to the dCTP deaminase family. As to quaternary structure, homotrimer.

It catalyses the reaction dCTP + H2O + H(+) = dUTP + NH4(+). Its pathway is pyrimidine metabolism; dUMP biosynthesis; dUMP from dCTP (dUTP route): step 1/2. Functionally, catalyzes the deamination of dCTP to dUTP. This chain is dCTP deaminase, found in Coxiella burnetii (strain CbuK_Q154) (Coxiella burnetii (strain Q154)).